Consider the following 332-residue polypeptide: 5-dehydro-2-deoxygluconokinase (332 aa).

Belongs to the carbohydrate kinase PfkB family.

The catalysed reaction is 5-dehydro-2-deoxy-D-gluconate + ATP = 6-phospho-5-dehydro-2-deoxy-D-gluconate + ADP + H(+). The protein operates within polyol metabolism; myo-inositol degradation into acetyl-CoA; acetyl-CoA from myo-inositol: step 5/7. Catalyzes the phosphorylation of 5-dehydro-2-deoxy-D-gluconate (2-deoxy-5-keto-D-gluconate or DKG) to 6-phospho-5-dehydro-2-deoxy-D-gluconate (DKGP). This is 5-dehydro-2-deoxygluconokinase from Bacillus thuringiensis (strain Al Hakam).